The chain runs to 251 residues: MAIHADTHDDLRLFQTGEHACGYWSDRQARDLVLDPHDPRLGAIYPQALAWGFRRSGDLVYRPHCERCRACVPVRIAVAAFHPDRSQRRCLARNQDLVVRVVAAERTDEQLALYRHYLKHRHPGGGMDEHGATEFDQFLIGGWSHGRFLEIREPAIAHLPGRLLAVAVTDVTGHALSAVYTFYTPEAAARSLGTFAILQQIQWAQRERRAHLYLGYWIDGHAKMNYKRRFSALEAYDGRHWRGLPAHASVD.

Belongs to the R-transferase family. Bpt subfamily.

It is found in the cytoplasm. It carries out the reaction N-terminal L-glutamyl-[protein] + L-leucyl-tRNA(Leu) = N-terminal L-leucyl-L-glutamyl-[protein] + tRNA(Leu) + H(+). The catalysed reaction is N-terminal L-aspartyl-[protein] + L-leucyl-tRNA(Leu) = N-terminal L-leucyl-L-aspartyl-[protein] + tRNA(Leu) + H(+). Functionally, functions in the N-end rule pathway of protein degradation where it conjugates Leu from its aminoacyl-tRNA to the N-termini of proteins containing an N-terminal aspartate or glutamate. The polypeptide is Aspartate/glutamate leucyltransferase (Xanthomonas euvesicatoria pv. vesicatoria (strain 85-10) (Xanthomonas campestris pv. vesicatoria)).